A 218-amino-acid polypeptide reads, in one-letter code: N-(5'-phosphoribosyl)anthranilate isomerase (218 aa).

The protein belongs to the TrpF family.

The enzyme catalyses N-(5-phospho-beta-D-ribosyl)anthranilate = 1-(2-carboxyphenylamino)-1-deoxy-D-ribulose 5-phosphate. Its pathway is amino-acid biosynthesis; L-tryptophan biosynthesis; L-tryptophan from chorismate: step 3/5. The protein is N-(5'-phosphoribosyl)anthranilate isomerase of Rhodopseudomonas palustris (strain BisB18).